We begin with the raw amino-acid sequence, 2052 residues long: Unconventional myosin-X (2052 aa).

N-acetylmethionine is present on M1. A Myosin motor domain is found at 63–739 (EGVDDMATLT…LEQKLEKRQE (677 aa)). Residues N104, Y113, 160-165 (GAGKTE), and N215 contribute to the ATP site. The actin-binding stretch occupies residues 619-641 (LHSLMATLSASNPFFVRCIKPNM). IQ domains follow at residues 742 to 763 (VTRA…KQYK), 764 to 787 (KVLD…RFLH), and 788 to 817 (LKKA…EKRA). The SAH stretch occupies residues 814 to 884 (EKRAEEEKRK…LSRELEKQKE (71 aa)). Residues 819 to 843 (EEKRKREEEEKRKREEEERERERER) are disordered. A coiled-coil region spans residues 885–935 (NKQVEEILRLEKEIEDLQRMKERQELSLTEASLQKLQQLRDEELRRLEDEA). Phosphoserine is present on residues S963 and S966. Residues 964–1093 (VGSGCTGEQG…DYDQDDYEDG (130 aa)) are disordered. Positions 988-1003 (PEEEEVDEGFEADDDA) are enriched in acidic residues. Residues 1040–1049 (VVPTSPSADS) are compositionally biased toward polar residues. The segment covering 1081-1092 (GDYDYDQDDYED) has biased composition (acidic residues). Position 1152 is a phosphothreonine (T1152). 2 PH domains span residues 1206–1304 (EALK…QVHA) and 1386–1491 (EFIV…NVTD). Positions 1541-1689 (LPYGDINLNL…PSRDEIEALI (149 aa)) constitute a MyTH4 domain. Positions 1694–2038 (MTSTVHCHGG…AYISMIVKKR (345 aa)) constitute an FERM domain.

Belongs to the TRAFAC class myosin-kinesin ATPase superfamily. Myosin family. Monomer, when in an inactive conformation in the cytosol. Homodimer in its active, membrane-bound conformation; antiparallel coiled coil-mediated dimer formation. Interacts with ECPAS. Interacts with NEO 1. Interacts with VASP. Interacts with DCC and ITGB5; the presence of DCC inhibits ITGB5 binding. Interacts with tubulin; ITGB5 or DCC binding inhibits tubulin binding. Interacts strongly with CALM3 and weakly with CALM, the CALM3 interaction is essential for function in filopodial extension and motility. Interacts with ITGB1, ITGB3 and ITGB5. Detected in kidney, testis, liver, kidney, cerebellum and brain cortex (at protein level).

It is found in the cytoplasm. It localises to the cytosol. Its subcellular location is the cell projection. The protein resides in the lamellipodium. The protein localises to the ruffle. It is found in the cytoskeleton. It localises to the filopodium tip. Its subcellular location is the cell cortex. The protein resides in the filopodium membrane. Myosins are actin-based motor molecules with ATPase activity. Unconventional myosins serve in intracellular movements. MYO10 binds to actin filaments and actin bundles and functions as a plus end-directed motor. Moves with higher velocity and takes larger steps on actin bundles than on single actin filaments. The tail domain binds to membranous compartments containing phosphatidylinositol 3,4,5-trisphosphate, which are then moved relative to actin filaments. Regulates cell shape, cell spreading and cell adhesion. Stimulates the formation and elongation of filopodia. In hippocampal neurons it induces the formation of dendritic filopodia by trafficking the actin-remodeling protein VASP to the tips of filopodia, where it promotes actin elongation. Plays a role in formation of the podosome belt in osteoclasts. The sequence is that of Unconventional myosin-X (MYO10) from Bos taurus (Bovine).